Here is a 387-residue protein sequence, read N- to C-terminus: S-adenosylmethionine synthase (387 aa).

His-15 contributes to the ATP binding site. A Mg(2+)-binding site is contributed by Asp-17. Glu-43 serves as a coordination point for K(+). The L-methionine site is built by Glu-56 and Gln-99. The tract at residues 99–109 (QSPDIAQGVNA) is flexible loop. Residues 166–168 (DAK), 232–233 (RF), Asp-241, 247–248 (RK), Ala-264, and Lys-268 each bind ATP. Residue Asp-241 participates in L-methionine binding. Lys-272 contacts L-methionine.

It belongs to the AdoMet synthase family. In terms of assembly, homotetramer; dimer of dimers. It depends on Mg(2+) as a cofactor. The cofactor is K(+).

The protein resides in the cytoplasm. It carries out the reaction L-methionine + ATP + H2O = S-adenosyl-L-methionine + phosphate + diphosphate. Its pathway is amino-acid biosynthesis; S-adenosyl-L-methionine biosynthesis; S-adenosyl-L-methionine from L-methionine: step 1/1. Its function is as follows. Catalyzes the formation of S-adenosylmethionine (AdoMet) from methionine and ATP. The overall synthetic reaction is composed of two sequential steps, AdoMet formation and the subsequent tripolyphosphate hydrolysis which occurs prior to release of AdoMet from the enzyme. In Dechloromonas aromatica (strain RCB), this protein is S-adenosylmethionine synthase.